Consider the following 188-residue polypeptide: Guanylate kinase (188 aa).

The region spanning 8-188 (GRIVVLAGPS…AVAAISEILR (181 aa)) is the Guanylate kinase-like domain. Position 15-22 (15-22 (GPSAVGKS)) interacts with ATP.

This sequence belongs to the guanylate kinase family.

Its subcellular location is the cytoplasm. It catalyses the reaction GMP + ATP = GDP + ADP. Functionally, essential for recycling GMP and indirectly, cGMP. The protein is Guanylate kinase of Corynebacterium jeikeium (strain K411).